The chain runs to 101 residues: Small ribosomal subunit protein uS14 (101 aa).

It belongs to the universal ribosomal protein uS14 family. As to quaternary structure, part of the 30S ribosomal subunit. Contacts proteins S3 and S10.

Its function is as follows. Binds 16S rRNA, required for the assembly of 30S particles and may also be responsible for determining the conformation of the 16S rRNA at the A site. In Francisella philomiragia subsp. philomiragia (strain ATCC 25017 / CCUG 19701 / FSC 153 / O#319-036), this protein is Small ribosomal subunit protein uS14.